Reading from the N-terminus, the 154-residue chain is Myoglobin (154 aa).

Positions 2-148 constitute a Globin domain; it reads VLTDAEWHLV…FRKDIAAKYK (147 aa). His65 contributes to the nitrite binding site. An O2-binding site is contributed by His65. Thr68 is modified (phosphothreonine). His94 is a heme b binding site.

It belongs to the globin family. In terms of assembly, monomeric.

The protein resides in the cytoplasm. Its subcellular location is the sarcoplasm. It catalyses the reaction Fe(III)-heme b-[protein] + nitric oxide + H2O = Fe(II)-heme b-[protein] + nitrite + 2 H(+). The enzyme catalyses H2O2 + AH2 = A + 2 H2O. In terms of biological role, monomeric heme protein which primary function is to store oxygen and facilitate its diffusion within muscle tissues. Reversibly binds oxygen through a pentacoordinated heme iron and enables its timely and efficient release as needed during periods of heightened demand. Depending on the oxidative conditions of tissues and cells, and in addition to its ability to bind oxygen, it also has a nitrite reductase activity whereby it regulates the production of bioactive nitric oxide. Under stress conditions, like hypoxia and anoxia, it also protects cells against reactive oxygen species thanks to its pseudoperoxidase activity. The protein is Myoglobin (MB) of Balaenoptera physalus (Fin whale).